A 578-amino-acid polypeptide reads, in one-letter code: Probable nucleoredoxin 1 (578 aa).

3 Thioredoxin domains span residues 18–172, 178–321, and 325–485; these read SLLS…RARR, SVLV…EKFQ, and ELEK…EIEA.

This sequence belongs to the nucleoredoxin family.

The enzyme catalyses [protein]-dithiol + NAD(+) = [protein]-disulfide + NADH + H(+). It catalyses the reaction [protein]-dithiol + NADP(+) = [protein]-disulfide + NADPH + H(+). Probable thiol-disulfide oxidoreductase required for pollen tube growth and pollen function in the pistil. Seems not to be required for in vitro pollen tube growth. May be involved in the generation of lipid signaling molecules in pistil. This Arabidopsis thaliana (Mouse-ear cress) protein is Probable nucleoredoxin 1.